The primary structure comprises 237 residues: Derlin-2 (237 aa).

Residues 1-20 lie on the Cytoplasmic side of the membrane; it reads MNGVVAALEEMPPVTRFYTG. A helical transmembrane segment spans residues 21-41; it reads ACVLLTTAVHLEFVTPFHLYF. Residues 42-54 lie on the Lumenal side of the membrane; the sequence is NWELIIRKYQFWR. A helical membrane pass occupies residues 55–75; it reads LITSFCFFGSFGFSFLFNMIF. Over 76-97 the chain is Cytoplasmic; it reads TYRYCMMLEEGSFRGRRADFVY. Residues 98-118 traverse the membrane as a helical segment; sequence MFLFGAVLMILSGIFVQILFL. Over 119 to 166 the chain is Lumenal; the sequence is GQAFTIMLVYIWSRRNPMIQMNFFGVLTFTAPYLPWVLLLFSLLLGNN. The chain crosses the membrane as a helical span at residues 167 to 187; that stretch reads AVVDFMGIACGHIYFFLEDVF. Over 188–237 the chain is Cytoplasmic; the sequence is PFQEHGKRFLKTPQWLVYLFDERRPEPLPEDERPGGFEWGDEQPEQEQHD. Positions 212 to 222 are enriched in basic and acidic residues; sequence PEPLPEDERPG. The tract at residues 212-237 is disordered; it reads PEPLPEDERPGGFEWGDEQPEQEQHD. A compositionally biased stretch (acidic residues) spans 226-237; that stretch reads WGDEQPEQEQHD.

This sequence belongs to the derlin family.

It is found in the endoplasmic reticulum membrane. May be required for the degradation process of some specific misfolded endoplasmic reticulum (ER) luminal proteins. Participates in the transfer of misfolded proteins from the ER to the cytosol, where they are destroyed by the proteasome in a ubiquitin-dependent manner. Its precise function remains unclear, but its ability to complement der1 mutations in C.cerevisiae, suggests a similar function in the degradation of ER misfolded proteins. This is Derlin-2 from Caenorhabditis elegans.